Consider the following 236-residue polypeptide: Leucyl/phenylalanyl-tRNA--protein transferase (236 aa).

This sequence belongs to the L/F-transferase family.

The protein resides in the cytoplasm. It carries out the reaction N-terminal L-lysyl-[protein] + L-leucyl-tRNA(Leu) = N-terminal L-leucyl-L-lysyl-[protein] + tRNA(Leu) + H(+). The catalysed reaction is N-terminal L-arginyl-[protein] + L-leucyl-tRNA(Leu) = N-terminal L-leucyl-L-arginyl-[protein] + tRNA(Leu) + H(+). The enzyme catalyses L-phenylalanyl-tRNA(Phe) + an N-terminal L-alpha-aminoacyl-[protein] = an N-terminal L-phenylalanyl-L-alpha-aminoacyl-[protein] + tRNA(Phe). Its function is as follows. Functions in the N-end rule pathway of protein degradation where it conjugates Leu, Phe and, less efficiently, Met from aminoacyl-tRNAs to the N-termini of proteins containing an N-terminal arginine or lysine. The polypeptide is Leucyl/phenylalanyl-tRNA--protein transferase (Shewanella woodyi (strain ATCC 51908 / MS32)).